We begin with the raw amino-acid sequence, 148 residues long: UPF0735 ACT domain-containing protein Dred_1164 (148 aa).

Positions 72 to 147 (TLALLMEHQP…GVREVRLVGQ (76 aa)) constitute an ACT domain.

This sequence belongs to the UPF0735 family.

The chain is UPF0735 ACT domain-containing protein Dred_1164 from Desulforamulus reducens (strain ATCC BAA-1160 / DSM 100696 / MI-1) (Desulfotomaculum reducens).